Here is a 496-residue protein sequence, read N- to C-terminus: 6-phosphogluconate dehydrogenase, decarboxylating (496 aa).

NADP(+)-binding positions include 13-18, 24-26, 68-70, and N96; these read GLDVSI, DNV, and ITH. Residues N96 and 122-124 each bind substrate; that span reads SGG. The active-site Proton acceptor is K178. Residue 181–182 participates in substrate binding; sequence HN. The active-site Proton donor is E185. 2 residues coordinate substrate: R300 and H468. The tract at residues 476-496 is disordered; that stretch reads PGEDPGPVSKGPHHYEWRPAK.

Belongs to the 6-phosphogluconate dehydrogenase family. In terms of assembly, homodimer.

It localises to the cytoplasm. The catalysed reaction is 6-phospho-D-gluconate + NADP(+) = D-ribulose 5-phosphate + CO2 + NADPH. Its pathway is carbohydrate degradation; pentose phosphate pathway; D-ribulose 5-phosphate from D-glucose 6-phosphate (oxidative stage): step 3/3. In terms of biological role, catalyzes the oxidative decarboxylation of 6-phosphogluconate to ribulose 5-phosphate and CO(2), with concomitant reduction of NADP to NADPH. The sequence is that of 6-phosphogluconate dehydrogenase, decarboxylating from Emericella nidulans (strain FGSC A4 / ATCC 38163 / CBS 112.46 / NRRL 194 / M139) (Aspergillus nidulans).